The following is a 347-amino-acid chain: DNA-directed RNA polymerase subunit alpha (347 aa).

Positions 1–226 (MLISQRPTLS…ELFGLARELN (226 aa)) are alpha N-terminal domain (alpha-NTD). Residues 243 to 347 (HIASFALPID…EQDYAETEQL (105 aa)) form an alpha C-terminal domain (alpha-CTD) region.

The protein belongs to the RNA polymerase alpha chain family. As to quaternary structure, homodimer. The RNAP catalytic core consists of 2 alpha, 1 beta, 1 beta' and 1 omega subunit. When a sigma factor is associated with the core the holoenzyme is formed, which can initiate transcription.

The catalysed reaction is RNA(n) + a ribonucleoside 5'-triphosphate = RNA(n+1) + diphosphate. Its function is as follows. DNA-dependent RNA polymerase catalyzes the transcription of DNA into RNA using the four ribonucleoside triphosphates as substrates. This chain is DNA-directed RNA polymerase subunit alpha, found in Mycobacterium bovis (strain ATCC BAA-935 / AF2122/97).